Here is a 276-residue protein sequence, read N- to C-terminus: MLMITSFANPRVAQAFVDYMATQGVILTIQQHNQSDIWLADESQAERVRVELARFIENPGDPRYLAASWQSGQTNSGLRYRRFPFLATLRERAGPVTWIVMLACVLVYIAMSLIGDQTVMVWLAWPFDPVLKFEVWRYFTHIFMHFSLMHILFNLLWWWYLGGAVEKRLGSGKLIVITVISALLSGYVQQKFSGPWFGGLSGVVYALMGYVWLRGERDPQSGIYLQRGLIIFALLWIVAGWFDWFGMSMANGAHIAGLIVGLAMAFVDTLNARKRT.

Helical transmembrane passes span 94–114 (GPVTWIVMLACVLVYIAMSLI), 142–162 (IFMHFSLMHILFNLLWWWYLG), 169–189 (LGSGKLIVITVISALLSGYVQ), 192–212 (FSGPWFGGLSGVVYALMGYVW), 229–249 (LIIFALLWIVAGWFDWFGMSM), and 250–270 (ANGAHIAGLIVGLAMAFVDTL). Catalysis depends on S201, which acts as the Nucleophile. H254 is a catalytic residue.

The protein belongs to the peptidase S54 family.

Its subcellular location is the cell inner membrane. It catalyses the reaction Cleaves type-1 transmembrane domains using a catalytic dyad composed of serine and histidine that are contributed by different transmembrane domains.. In terms of biological role, rhomboid-type serine protease that catalyzes intramembrane proteolysis. This chain is Rhomboid protease GlpG, found in Salmonella agona (strain SL483).